Here is a 339-residue protein sequence, read N- to C-terminus: Glyceraldehyde-3-phosphate dehydrogenase (339 aa).

NAD(+) is bound by residues 11–12 and Gly110; that span reads TI. 139 to 141 is a binding site for D-glyceraldehyde 3-phosphate; that stretch reads SCN. The active-site Nucleophile is the Cys140. Arg168 serves as a coordination point for NAD(+). 194–195 contacts D-glyceraldehyde 3-phosphate; it reads HG. Gln301 contributes to the NAD(+) binding site.

The protein belongs to the glyceraldehyde-3-phosphate dehydrogenase family. Homotetramer.

The protein localises to the cytoplasm. It carries out the reaction D-glyceraldehyde 3-phosphate + phosphate + NADP(+) = (2R)-3-phospho-glyceroyl phosphate + NADPH + H(+). The enzyme catalyses D-glyceraldehyde 3-phosphate + phosphate + NAD(+) = (2R)-3-phospho-glyceroyl phosphate + NADH + H(+). The protein operates within carbohydrate degradation; glycolysis; pyruvate from D-glyceraldehyde 3-phosphate: step 1/5. This Methanospirillum hungatei JF-1 (strain ATCC 27890 / DSM 864 / NBRC 100397 / JF-1) protein is Glyceraldehyde-3-phosphate dehydrogenase.